A 360-amino-acid chain; its full sequence is Casein kinase II subunit alpha (360 aa).

The region spanning 38-323 (YQLVRKLGRG…AQEAMGHEYF (286 aa)) is the Protein kinase domain. ATP contacts are provided by residues 44 to 52 (LGRGKYSEV) and Lys-67. The active-site Proton acceptor is Asp-155. The tract at residues 334–360 (NGTEQADGQGASNSASSQSSDAKIDGA) is disordered. Residues 338-354 (QADGQGASNSASSQSSD) are compositionally biased toward low complexity.

This sequence belongs to the protein kinase superfamily. Ser/Thr protein kinase family. CK2 subfamily. In terms of assembly, tetramer of two alpha and two beta chains. Expressed in a subset of the adult male sensory neurons: CEM head neurons, ray RnB neurons, and hook HOB tail neurons.

It is found in the cell projection. It localises to the axon. The protein localises to the cilium. The protein resides in the dendrite. Its subcellular location is the perikaryon. The enzyme catalyses L-seryl-[protein] + ATP = O-phospho-L-seryl-[protein] + ADP + H(+). It carries out the reaction L-threonyl-[protein] + ATP = O-phospho-L-threonyl-[protein] + ADP + H(+). Its function is as follows. Casein kinases are operationally defined by their preferential utilization of acidic proteins such as caseins as substrates. The alpha chain contains the catalytic site. May participate in Wnt signaling. Modulates two aspects of male mating behavior; response to hermaphrodite contact and vulval location, acting in the same pathway as lov-1 and pkd-2. This Caenorhabditis elegans protein is Casein kinase II subunit alpha (kin-3).